The chain runs to 717 residues: Photosystem I P700 chlorophyll a apoprotein A1 (717 aa).

8 helical membrane-spanning segments follow: residues 58 to 81 (VFSAHFGQLSIIFLWLSGMYFHGA), 144 to 167 (LYCTAIGALVFAGLMLFAGWFHYH), 183 to 207 (LNHHLAGLLGLGSLSWAGHQVHVSL), 279 to 297 (IAHHHLAIAILFLIAGHMY), 334 to 357 (WHAQLSLNLAMLGSLTIVVAHHMY), 373 to 399 (LSLFTHHMWIGGFLIVGAAAHAAIFMV), 421 to 443 (AIISHLNWACIFLGFHSFGLYIH), and 519 to 537 (FLVHHIHAFTIHVTVLILL). Cys-561 and Cys-570 together coordinate [4Fe-4S] cluster. 2 consecutive transmembrane segments (helical) span residues 577–598 (HVFLGLFWMYNAISVVIFHFSW) and 652–674 (LSAYGLFFLGAHFVWAFSLMFLF). A chlorophyll a'-binding site is contributed by His-663. Chlorophyll a is bound by residues Met-671 and Tyr-679. Trp-680 serves as a coordination point for phylloquinone. The helical transmembrane segment at 712–717 (AVGVTH) threads the bilayer.

Belongs to the PsaA/PsaB family. The PsaA/B heterodimer binds the P700 chlorophyll special pair and subsequent electron acceptors. PSI consists of a core antenna complex that captures photons, and an electron transfer chain that converts photonic excitation into a charge separation. The eukaryotic PSI reaction center is composed of at least 11 subunits. P700 is a chlorophyll a/chlorophyll a' dimer, A0 is one or more chlorophyll a, A1 is one or both phylloquinones and FX is a shared 4Fe-4S iron-sulfur center. serves as cofactor.

The protein localises to the plastid. Its subcellular location is the chloroplast thylakoid membrane. It catalyses the reaction reduced [plastocyanin] + hnu + oxidized [2Fe-2S]-[ferredoxin] = oxidized [plastocyanin] + reduced [2Fe-2S]-[ferredoxin]. In terms of biological role, psaA and PsaB bind P700, the primary electron donor of photosystem I (PSI), as well as the electron acceptors A0, A1 and FX. PSI is a plastocyanin-ferredoxin oxidoreductase, converting photonic excitation into a charge separation, which transfers an electron from the donor P700 chlorophyll pair to the spectroscopically characterized acceptors A0, A1, FX, FA and FB in turn. Oxidized P700 is reduced on the lumenal side of the thylakoid membrane by plastocyanin. This Drimys winteri (Winter's bark) protein is Photosystem I P700 chlorophyll a apoprotein A1.